A 322-amino-acid chain; its full sequence is Cytochrome c biogenesis protein CcsA (322 aa).

The next 8 membrane-spanning stretches (helical) occupy residues Ile-9–Leu-29, Gly-44–Gly-64, Leu-71–Phe-91, Leu-98–Leu-118, Met-143–Ile-163, Val-226–Asn-246, Trp-253–Leu-273, and Ala-287–Leu-307.

The protein belongs to the CcmF/CycK/Ccl1/NrfE/CcsA family. As to quaternary structure, may interact with Ccs1.

It localises to the plastid. Its subcellular location is the chloroplast thylakoid membrane. Required during biogenesis of c-type cytochromes (cytochrome c6 and cytochrome f) at the step of heme attachment. The protein is Cytochrome c biogenesis protein CcsA of Helianthus annuus (Common sunflower).